Reading from the N-terminus, the 155-residue chain is Ribosomal RNA large subunit methyltransferase H (155 aa).

Residues Leu-72, Gly-103, and 122-127 (LSDLTL) contribute to the S-adenosyl-L-methionine site.

The protein belongs to the RNA methyltransferase RlmH family. In terms of assembly, homodimer.

The protein resides in the cytoplasm. It catalyses the reaction pseudouridine(1915) in 23S rRNA + S-adenosyl-L-methionine = N(3)-methylpseudouridine(1915) in 23S rRNA + S-adenosyl-L-homocysteine + H(+). Specifically methylates the pseudouridine at position 1915 (m3Psi1915) in 23S rRNA. The sequence is that of Ribosomal RNA large subunit methyltransferase H from Albidiferax ferrireducens (strain ATCC BAA-621 / DSM 15236 / T118) (Rhodoferax ferrireducens).